Consider the following 258-residue polypeptide: Thiazole synthase (258 aa).

Residue lysine 98 is the Schiff-base intermediate with DXP of the active site. 1-deoxy-D-xylulose 5-phosphate contacts are provided by residues glycine 159, 185-186, and 207-208; these read AG and NT.

Belongs to the ThiG family. In terms of assembly, homotetramer. Forms heterodimers with either ThiH or ThiS.

The protein localises to the cytoplasm. The catalysed reaction is [ThiS sulfur-carrier protein]-C-terminal-Gly-aminoethanethioate + 2-iminoacetate + 1-deoxy-D-xylulose 5-phosphate = [ThiS sulfur-carrier protein]-C-terminal Gly-Gly + 2-[(2R,5Z)-2-carboxy-4-methylthiazol-5(2H)-ylidene]ethyl phosphate + 2 H2O + H(+). Its pathway is cofactor biosynthesis; thiamine diphosphate biosynthesis. Catalyzes the rearrangement of 1-deoxy-D-xylulose 5-phosphate (DXP) to produce the thiazole phosphate moiety of thiamine. Sulfur is provided by the thiocarboxylate moiety of the carrier protein ThiS. In vitro, sulfur can be provided by H(2)S. This chain is Thiazole synthase, found in Bacillus thuringiensis subsp. konkukian (strain 97-27).